Here is a 273-residue protein sequence, read N- to C-terminus: Cytochrome b-c1 complex subunit Rieske, mitochondrial (273 aa).

Residues 1–61 constitute a mitochondrion transit peptide; the sequence is MLRVAGRRLS…PFFVASRGFS (61 aa). The disordered stretch occupies residues 25–46; that stretch reads PLAGAGVPDRDDDSARGRSQPR. Topologically, residues 62 to 110 are mitochondrial matrix; it reads STETVVPRNQDAGLADLPATVAAVKNPNPKVVYDEYNHERYPPGDPSKR. The chain crosses the membrane as a helical span at residues 111 to 133; the sequence is AFAYFVLSGGRFIYASLLRLLVL. At 134–273 the chain is on the mitochondrial intermembrane side; sequence KFVLSMSASK…FLEENKLLVG (140 aa). The 96-residue stretch at 176–271 folds into the Rieske domain; sequence RRRTEDDIKL…YSFLEENKLL (96 aa). The [2Fe-2S] cluster site is built by Cys216, His218, Cys235, and His238. Residues Cys221 and Cys237 are joined by a disulfide bond.

Belongs to the Rieske iron-sulfur protein family. Component of the ubiquinol-cytochrome c oxidoreductase (cytochrome b-c1 complex, complex III, CIII), a multisubunit enzyme composed of 3 respiratory subunits cytochrome b, cytochrome c1 and Rieske protein, 2 core protein subunits, and several low-molecular weight protein subunits. The complex exists as an obligatory dimer and forms supercomplexes (SCs) in the inner mitochondrial membrane with cytochrome c oxidase (complex IV, CIV). The cofactor is [2Fe-2S] cluster.

Its subcellular location is the mitochondrion inner membrane. It carries out the reaction a quinol + 2 Fe(III)-[cytochrome c](out) = a quinone + 2 Fe(II)-[cytochrome c](out) + 2 H(+)(out). In terms of biological role, component of the ubiquinol-cytochrome c oxidoreductase, a multisubunit transmembrane complex that is part of the mitochondrial electron transport chain which drives oxidative phosphorylation. The respiratory chain contains 3 multisubunit complexes succinate dehydrogenase (complex II, CII), ubiquinol-cytochrome c oxidoreductase (cytochrome b-c1 complex, complex III, CIII) and cytochrome c oxidase (complex IV, CIV), that cooperate to transfer electrons derived from NADH and succinate to molecular oxygen, creating an electrochemical gradient over the inner membrane that drives transmembrane transport and the ATP synthase. The cytochrome b-c1 complex catalyzes electron transfer from ubiquinol to cytochrome c, linking this redox reaction to translocation of protons across the mitochondrial inner membrane, with protons being carried across the membrane as hydrogens on the quinol. In the process called Q cycle, 2 protons are consumed from the matrix, 4 protons are released into the intermembrane space and 2 electrons are passed to cytochrome c. The Rieske protein is a catalytic core subunit containing a [2Fe-2S] iron-sulfur cluster. It cycles between 2 conformational states during catalysis to transfer electrons from the quinol bound in the Q(0) site in cytochrome b to cytochrome c1. This Zea mays (Maize) protein is Cytochrome b-c1 complex subunit Rieske, mitochondrial.